A 98-amino-acid chain; its full sequence is Large ribosomal subunit protein eL21 (98 aa).

Over residues 1–24 (MVKKAHSFRRKTRGKLSKHPRRRG) the composition is skewed to basic residues. A disordered region spans residues 1 to 27 (MVKKAHSFRRKTRGKLSKHPRRRGLPP).

Belongs to the eukaryotic ribosomal protein eL21 family.

The protein is Large ribosomal subunit protein eL21 of Thermococcus gammatolerans (strain DSM 15229 / JCM 11827 / EJ3).